The primary structure comprises 174 residues: ATP synthase subunit b, organellar chromatophore (174 aa).

A helical membrane pass occupies residues 26 to 46; the sequence is LINLIIVIGVLFTFLRGFLGE.

The protein belongs to the ATPase B chain family. In terms of assembly, F-type ATPases have 2 components, F(1) - the catalytic core - and F(0) - the membrane proton channel. F(1) has five subunits: alpha(3), beta(3), gamma(1), delta(1), epsilon(1). F(0) has four main subunits: a(1), b(1), b'(1) and c(10-14). The alpha and beta chains form an alternating ring which encloses part of the gamma chain. F(1) is attached to F(0) by a central stalk formed by the gamma and epsilon chains, while a peripheral stalk is formed by the delta, b and b' chains.

The protein resides in the plastid. It localises to the organellar chromatophore thylakoid membrane. Functionally, f(1)F(0) ATP synthase produces ATP from ADP in the presence of a proton or sodium gradient. F-type ATPases consist of two structural domains, F(1) containing the extramembraneous catalytic core and F(0) containing the membrane proton channel, linked together by a central stalk and a peripheral stalk. During catalysis, ATP synthesis in the catalytic domain of F(1) is coupled via a rotary mechanism of the central stalk subunits to proton translocation. Its function is as follows. Component of the F(0) channel, it forms part of the peripheral stalk, linking F(1) to F(0). The protein is ATP synthase subunit b, organellar chromatophore of Paulinella chromatophora.